A 361-amino-acid chain; its full sequence is Putative F-box protein At1g33010 (361 aa).

The F-box domain maps to 4-50 (GNTLDSIPTDLILEIFSRLSAKSVGRLRCLSKLWRKGEWFFFSSLQP). The segment at 308-339 (SIRPTEQKHKPTSTETSMSRKDHQVRTIDQPQ) is disordered.

This is Putative F-box protein At1g33010 from Arabidopsis thaliana (Mouse-ear cress).